Reading from the N-terminus, the 166-residue chain is Regulatory protein RecX (166 aa).

It belongs to the RecX family.

It localises to the cytoplasm. Functionally, modulates RecA activity. This Escherichia fergusonii (strain ATCC 35469 / DSM 13698 / CCUG 18766 / IAM 14443 / JCM 21226 / LMG 7866 / NBRC 102419 / NCTC 12128 / CDC 0568-73) protein is Regulatory protein RecX.